The following is a 619-amino-acid chain: tRNA (guanine(37)-N(1))-methyltransferase 2 (619 aa).

A mitochondrion-targeting transit peptide spans 1–10 (MVSKLSLFRA). S-adenosyl-L-methionine contacts are provided by residues Arg-434, 472 to 473 (DL), 500 to 501 (DG), and Asn-523.

Belongs to the class I-like SAM-binding methyltransferase superfamily. TRM5/TYW2 family. As to quaternary structure, monomer.

Its subcellular location is the mitochondrion matrix. The protein resides in the nucleus. The protein localises to the cytoplasm. The catalysed reaction is guanosine(37) in tRNA + S-adenosyl-L-methionine = N(1)-methylguanosine(37) in tRNA + S-adenosyl-L-homocysteine + H(+). Functionally, specifically methylates the N1 position of guanosine-37 in various cytoplasmic and mitochondrial tRNAs. Methylation is not dependent on the nature of the nucleoside 5' of the target nucleoside. This is the first step in the biosynthesis of wybutosine (yW), a modified base adjacent to the anticodon of tRNAs and required for accurate decoding. This chain is tRNA (guanine(37)-N(1))-methyltransferase 2, found in Arabidopsis thaliana (Mouse-ear cress).